The primary structure comprises 57 residues: Ribulose bisphosphate carboxylase large chain (57 aa).

Residues 1–2 constitute a propeptide that is removed on maturation; the sequence is MS. Position 3 is an N-acetylproline (Pro3). An N6,N6,N6-trimethyllysine modification is found at Lys14.

Belongs to the RuBisCO large chain family. Type I subfamily. As to quaternary structure, heterohexadecamer of 8 large chains and 8 small chains.

The protein localises to the plastid. It is found in the chloroplast. It carries out the reaction 2 (2R)-3-phosphoglycerate + 2 H(+) = D-ribulose 1,5-bisphosphate + CO2 + H2O. The enzyme catalyses D-ribulose 1,5-bisphosphate + O2 = 2-phosphoglycolate + (2R)-3-phosphoglycerate + 2 H(+). Its function is as follows. RuBisCO catalyzes two reactions: the carboxylation of D-ribulose 1,5-bisphosphate, the primary event in carbon dioxide fixation, as well as the oxidative fragmentation of the pentose substrate in the photorespiration process. Both reactions occur simultaneously and in competition at the same active site. The chain is Ribulose bisphosphate carboxylase large chain (rbcL) from Camellia sinensis (Tea plant).